The sequence spans 303 residues: UDP-3-O-acyl-N-acetylglucosamine deacetylase (303 aa).

The Zn(2+) site is built by His78, His237, and Asp241. Residue His264 is the Proton donor of the active site.

This sequence belongs to the LpxC family. It depends on Zn(2+) as a cofactor.

It catalyses the reaction a UDP-3-O-[(3R)-3-hydroxyacyl]-N-acetyl-alpha-D-glucosamine + H2O = a UDP-3-O-[(3R)-3-hydroxyacyl]-alpha-D-glucosamine + acetate. The protein operates within glycolipid biosynthesis; lipid IV(A) biosynthesis; lipid IV(A) from (3R)-3-hydroxytetradecanoyl-[acyl-carrier-protein] and UDP-N-acetyl-alpha-D-glucosamine: step 2/6. Functionally, catalyzes the hydrolysis of UDP-3-O-myristoyl-N-acetylglucosamine to form UDP-3-O-myristoylglucosamine and acetate, the committed step in lipid A biosynthesis. In Pseudomonas syringae pv. tomato (strain ATCC BAA-871 / DC3000), this protein is UDP-3-O-acyl-N-acetylglucosamine deacetylase.